Here is a 1250-residue protein sequence, read N- to C-terminus: Cell adhesion molecule-related/down-regulated by oncogenes (1250 aa).

The first 24 residues, 1–24, serve as a signal peptide directing secretion; sequence MHPDLGPLWTLLYVLVILCSSVSS. Residues 25–962 are Extracellular-facing; sequence DLAPYFISEP…SPARSSDMLY (938 aa). Ig-like C2-type domains are found at residues 28–113, 119–203, 224–302, 309–395, and 404–515; these read PYFI…ATVS, DFDS…LKVE, PALS…KHVT, EHAS…GRLQ, and PVIV…AFLT. Cysteine 49 and cysteine 96 are disulfide-bonded. Asparagine 99, asparagine 179, asparagine 286, asparagine 293, asparagine 341, and asparagine 426 each carry an N-linked (GlcNAc...) asparagine glycan. 2 disulfide bridges follow: cysteine 140–cysteine 190 and cysteine 242–cysteine 289. 2 disulfides stabilise this stretch: cysteine 332–cysteine 379 and cysteine 425–cysteine 499. Residues 524 to 534 show a composition bias toward polar residues; sequence KAESVTPSEAS. The segment at 524–547 is disordered; it reads KAESVTPSEASQNDERDPQDGSES. Residue asparagine 569 is glycosylated (N-linked (GlcNAc...) asparagine). Fibronectin type-III domains follow at residues 572 to 673, 719 to 814, and 822 to 922; these read VPDA…SKEK, APDR…VAGF, and PITG…TKVK. An N-linked (GlcNAc...) asparagine glycan is attached at asparagine 869. Residues 929 to 951 are disordered; it reads DYPVKELSTPPSSSGNAGNVGPA. The chain crosses the membrane as a helical span at residues 963–983; the sequence is LIVGCVLGVMVLILMVFIALC. Over 984–1250 the chain is Cytoplasmic; it reads LWKSRQQSTI…SVVLQQAQET (267 aa). Disordered regions lie at residues 1178 to 1208 and 1223 to 1250; these read DNISDINSDSTEDTAEFSRGDSSGHSEAEDK and DCGEKTARSPPGPPLDGLSVVLQQAQET. Over residues 1193–1208 the composition is skewed to basic and acidic residues; sequence EFSRGDSSGHSEAEDK.

As to quaternary structure, part of a complex that contains BOC, CDON, NEO1, cadherins and CTNNB1. Interacts with NTN3. Interacts with DHH, IHH and SHH. In terms of processing, N-glycosylated. Highly expressed in somites and the dorsal lips of the neural tube during embryogenesis. Detected at very low levels in adult tissues.

The protein resides in the cell membrane. Its function is as follows. Component of a cell-surface receptor complex that mediates cell-cell interactions between muscle precursor cells. Promotes differentiation of myogenic cells. Required for response to NTN3 and activation of NFATC3. In Mus musculus (Mouse), this protein is Cell adhesion molecule-related/down-regulated by oncogenes (Cdon).